The sequence spans 196 residues: Hibernation-associated plasma protein HP-20 (196 aa).

Residues 1–23 (MTDVWRLAIFVLMVNVLNDQVSC) form the signal peptide. A Collagen-like domain is found at 25–63 (GPPGPVGYPGVPGVPGPRGPPGQPGAAGRPGDPGPKGPS). Over residues 28-47 (GPVGYPGVPGVPGPRGPPGQ) the composition is skewed to pro residues. A disordered region spans residues 28–64 (GPVGYPGVPGVPGPRGPPGQPGAAGRPGDPGPKGPSV). Residues 67-196 (PCRERSAFTV…IYFSGFLISS (130 aa)) enclose the C1q domain.

As to expression, plasma; synthesized in the liver.

Its subcellular location is the secreted. In terms of biological role, plasma proteins HP-20, HP-25, HP-27 and HP-55 form a 140 kDa complex via disulfide bonds in the plasma and are hibernation specific. The polypeptide is Hibernation-associated plasma protein HP-20 (Tamias sibiricus (Siberian chipmunk)).